The sequence spans 75 residues: Exodeoxyribonuclease 7 small subunit (75 aa).

This sequence belongs to the XseB family. In terms of assembly, heterooligomer composed of large and small subunits.

Its subcellular location is the cytoplasm. The enzyme catalyses Exonucleolytic cleavage in either 5'- to 3'- or 3'- to 5'-direction to yield nucleoside 5'-phosphates.. Its function is as follows. Bidirectionally degrades single-stranded DNA into large acid-insoluble oligonucleotides, which are then degraded further into small acid-soluble oligonucleotides. This Listeria welshimeri serovar 6b (strain ATCC 35897 / DSM 20650 / CCUG 15529 / CIP 8149 / NCTC 11857 / SLCC 5334 / V8) protein is Exodeoxyribonuclease 7 small subunit.